Consider the following 369-residue polypeptide: MAFAGLKKQINKANQYMTEKMGGAEGTKLDMDFMDMERKTDVTVELVEELQLKTKEFLQPNPTARAKMAAVKGISKLSGQAKSNTYPQPEGLLAECMLTYGKKLGEDNSVFAQALVEFGESLKQMADVKYSLDDNIKQNFLEPLHHMQMKDLKEVMHHRKKLQGRRLDFDCKRRRQAKDDEIRGAEDKFAESLQLAQVGMFNLLENDTEHVSQLVTFAEALYDFHSQCADVLRGLQETLQEKRSEAESRPRNEFVPKTLLDLNLDGGGGGLIDDGTPSHISSSASPLPSPMRSPAKSMAVTPSRQQQPCCQALYDFDPENPGELGFKENDIITLLNRVDDNWYEGAVNGRTGYFPQSYVQVQVPLPNGN.

A BAR domain is found at 18-248; sequence TEKMGGAEGT…LQEKRSEAES (231 aa). Positions 227–247 form a coiled coil; sequence QCADVLRGLQETLQEKRSEAE. Low complexity predominate over residues 275–294; sequence GTPSHISSSASPLPSPMRSP. The tract at residues 275 to 296 is disordered; the sequence is GTPSHISSSASPLPSPMRSPAK. Positions 305-364 constitute an SH3 domain; the sequence is QQQPCCQALYDFDPENPGELGFKENDIITLLNRVDDNWYEGAVNGRTGYFPQSYVQVQVP.

This sequence belongs to the endophilin family.

The protein localises to the cytoplasm. It localises to the membrane. Functionally, required presynaptically at the neuromuscular junction. Implicated in synaptic vesicle endocytosis. The protein is Endophilin-A of Drosophila pseudoobscura pseudoobscura (Fruit fly).